The sequence spans 371 residues: UDP-N-acetylglucosamine--N-acetylmuramyl-(pentapeptide) pyrophosphoryl-undecaprenol N-acetylglucosamine transferase (371 aa).

UDP-N-acetyl-alpha-D-glucosamine-binding positions include 15–17, N126, R172, S199, I256, 275–280, and Q301; these read TGG and ALTVSE.

The protein belongs to the glycosyltransferase 28 family. MurG subfamily.

Its subcellular location is the cell inner membrane. The catalysed reaction is di-trans,octa-cis-undecaprenyl diphospho-N-acetyl-alpha-D-muramoyl-L-alanyl-D-glutamyl-meso-2,6-diaminopimeloyl-D-alanyl-D-alanine + UDP-N-acetyl-alpha-D-glucosamine = di-trans,octa-cis-undecaprenyl diphospho-[N-acetyl-alpha-D-glucosaminyl-(1-&gt;4)]-N-acetyl-alpha-D-muramoyl-L-alanyl-D-glutamyl-meso-2,6-diaminopimeloyl-D-alanyl-D-alanine + UDP + H(+). It participates in cell wall biogenesis; peptidoglycan biosynthesis. Functionally, cell wall formation. Catalyzes the transfer of a GlcNAc subunit on undecaprenyl-pyrophosphoryl-MurNAc-pentapeptide (lipid intermediate I) to form undecaprenyl-pyrophosphoryl-MurNAc-(pentapeptide)GlcNAc (lipid intermediate II). The polypeptide is UDP-N-acetylglucosamine--N-acetylmuramyl-(pentapeptide) pyrophosphoryl-undecaprenol N-acetylglucosamine transferase (Francisella tularensis subsp. mediasiatica (strain FSC147)).